Here is a 1121-residue protein sequence, read N- to C-terminus: tRNA (34-2'-O)-methyltransferase regulator WDR6 (1121 aa).

Met-1 bears the N-acetylmethionine mark. 19 WD repeats span residues Ile-53–Ile-97, Trp-105–Pro-143, Cys-147–Pro-189, Ala-200–Val-238, Arg-247–His-285, Ile-289–Leu-327, Leu-335–Val-376, Trp-381–Ile-422, Pro-425–Ala-470, Ile-476–Ser-520, Pro-559–Asp-598, Val-604–Pro-642, His-645–Ala-684, Leu-739–Ile-785, Arg-848–Leu-893, Gln-901–Leu-946, Gly-970–Leu-1012, Glu-1036–Leu-1073, and Thr-1079–Asp-1121.

Belongs to the WD repeat WDR6 family. In terms of assembly, interacts with FTSJ1; the interaction is direct, and required for 2'-O-methylation of position 34 in substrate tRNAs. Interacts with IRS4. Interacts with STK11/LKB1. In terms of tissue distribution, ubiquitous.

It is found in the cytoplasm. Its function is as follows. Together with methyltransferase FTSJ1, methylates the 2'-O-ribose of nucleotides at position 34 of the tRNA anticodon loop of substrate tRNAs. Required for the correct positioning of the substrate tRNA for methylation. Required to suppress amino acid starvation-induced autophagy. Enhances the STK11/LKB1-induced cell growth suppression activity. The protein is tRNA (34-2'-O)-methyltransferase regulator WDR6 (WDR6) of Homo sapiens (Human).